The primary structure comprises 174 residues: Co-chaperone protein HscB homolog (174 aa).

The J domain occupies 2–74 (NYFELFSFTP…ILRAEHMLSL (73 aa)).

This sequence belongs to the HscB family. Interacts with HscA and stimulates its ATPase activity.

Its function is as follows. Co-chaperone involved in the maturation of iron-sulfur cluster-containing proteins. Seems to help targeting proteins to be folded toward HscA. This Shewanella woodyi (strain ATCC 51908 / MS32) protein is Co-chaperone protein HscB homolog.